The primary structure comprises 697 residues: Putative cryptochrome DASH (697 aa).

The 160-residue stretch at Lys-5–Tyr-164 folds into the Photolyase/cryptochrome alpha/beta domain. Disordered stretches follow at residues Asp-170–Trp-215 and Phe-554–Ile-697. Over residues Lys-188 to Arg-198 the composition is skewed to basic and acidic residues. A compositionally biased stretch (basic residues) spans Arg-560–Arg-569. Over residues Gly-578–Ser-590 the composition is skewed to gly residues. 2 stretches are compositionally biased toward low complexity: residues Gln-659 to Gln-675 and Arg-683 to Ile-697.

The protein belongs to the DNA photolyase class-1 family. The cofactor is FAD. Requires (6R)-5,10-methylene-5,6,7,8-tetrahydrofolate as cofactor.

In terms of biological role, may have a photoreceptor function. The chain is Putative cryptochrome DASH from Gibberella zeae (strain ATCC MYA-4620 / CBS 123657 / FGSC 9075 / NRRL 31084 / PH-1) (Wheat head blight fungus).